The chain runs to 276 residues: Protein SCO1 homolog 2, mitochondrial (276 aa).

A mitochondrion-targeting transit peptide spans 1–14 (MLPCRRLVLSCKNQ). Residues 66–82 (YAVPAILLGFAGFVGFL) form a helical membrane-spanning segment. Residues 110 to 273 (VKGPIIGGPF…SQELLKEVAS (164 aa)) form the Thioredoxin domain.

Belongs to the SCO1/2 family. In terms of tissue distribution, expressed in the whole plant with highest expression in imbibed seeds and embryos, and the root hair zone.

It localises to the mitochondrion inner membrane. In terms of biological role, thought to play a role in cellular copper homeostasis, mitochondrial redox signaling or insertion of copper into the active site of COX. Participates in copper and redox homeostasis. The protein is Protein SCO1 homolog 2, mitochondrial (HCC2) of Arabidopsis thaliana (Mouse-ear cress).